We begin with the raw amino-acid sequence, 213 residues long: Protein GrpE (213 aa).

A disordered region spans residues 1–61; that stretch reads MEQGEKQVME…AEKAPTAEEL (61 aa). A compositionally biased stretch (acidic residues) spans 13 to 35; that stretch reads TYDEPEREQPIEEEAAPQPEEES.

The protein belongs to the GrpE family. Homodimer.

The protein resides in the cytoplasm. Its function is as follows. Participates actively in the response to hyperosmotic and heat shock by preventing the aggregation of stress-denatured proteins, in association with DnaK and GrpE. It is the nucleotide exchange factor for DnaK and may function as a thermosensor. Unfolded proteins bind initially to DnaJ; upon interaction with the DnaJ-bound protein, DnaK hydrolyzes its bound ATP, resulting in the formation of a stable complex. GrpE releases ADP from DnaK; ATP binding to DnaK triggers the release of the substrate protein, thus completing the reaction cycle. Several rounds of ATP-dependent interactions between DnaJ, DnaK and GrpE are required for fully efficient folding. This chain is Protein GrpE, found in Geobacillus kaustophilus (strain HTA426).